Consider the following 229-residue polypeptide: Potassium/proton antiporter CemA (229 aa).

3 helical membrane-spanning segments follow: residues 7–27 (FTPL…SLSF), 114–134 (IISF…LVIL), and 190–210 (ISGL…YWIF).

The protein belongs to the CemA family.

The protein localises to the plastid. It is found in the chloroplast inner membrane. It catalyses the reaction K(+)(in) + H(+)(out) = K(+)(out) + H(+)(in). Contributes to K(+)/H(+) antiport activity by supporting proton efflux to control proton extrusion and homeostasis in chloroplasts in a light-dependent manner to modulate photosynthesis. Prevents excessive induction of non-photochemical quenching (NPQ) under continuous-light conditions. Indirectly promotes efficient inorganic carbon uptake into chloroplasts. This Jasminum nudiflorum (Winter jasmine) protein is Potassium/proton antiporter CemA.